The primary structure comprises 131 residues: Holo-[acyl-carrier-protein] synthase (131 aa).

2 residues coordinate Mg(2+): Asp-8 and Glu-62.

Belongs to the P-Pant transferase superfamily. AcpS family. Mg(2+) is required as a cofactor.

Its subcellular location is the cytoplasm. It catalyses the reaction apo-[ACP] + CoA = holo-[ACP] + adenosine 3',5'-bisphosphate + H(+). Its function is as follows. Transfers the 4'-phosphopantetheine moiety from coenzyme A to a Ser of acyl-carrier-protein. The sequence is that of Holo-[acyl-carrier-protein] synthase from Delftia acidovorans (strain DSM 14801 / SPH-1).